The primary structure comprises 496 residues: Glycerol kinase (496 aa).

T12 contacts ADP. The ATP site is built by T12, T13, and S14. T12 is a binding site for sn-glycerol 3-phosphate. R16 is a binding site for ADP. Positions 82, 83, and 134 each coordinate sn-glycerol 3-phosphate. R82, E83, and Y134 together coordinate glycerol. Residue H230 is modified to Phosphohistidine; by HPr. D244 provides a ligand contact to sn-glycerol 3-phosphate. Residues D244 and Q245 each contribute to the glycerol site. Residues T266 and G309 each contribute to the ADP site. ATP contacts are provided by T266, G309, Q313, and G410. Positions 410 and 414 each coordinate ADP.

Belongs to the FGGY kinase family. In terms of assembly, homotetramer and homodimer (in equilibrium). In terms of processing, the phosphoenolpyruvate-dependent sugar phosphotransferase system (PTS), including enzyme I, and histidine-containing protein (HPr) are required for the phosphorylation, which leads to the activation of the enzyme.

The enzyme catalyses glycerol + ATP = sn-glycerol 3-phosphate + ADP + H(+). It participates in polyol metabolism; glycerol degradation via glycerol kinase pathway; sn-glycerol 3-phosphate from glycerol: step 1/1. Its activity is regulated as follows. Activated by phosphorylation and inhibited by fructose 1,6-bisphosphate (FBP). In terms of biological role, key enzyme in the regulation of glycerol uptake and metabolism. Catalyzes the phosphorylation of glycerol to yield sn-glycerol 3-phosphate. This is Glycerol kinase from Bacillus mycoides (strain KBAB4) (Bacillus weihenstephanensis).